The sequence spans 1180 residues: Pesticidal crystal protein Cry4Aa (1180 aa).

Belongs to the delta endotoxin family.

Promotes colloidosmotic lysis by binding to the midgut epithelial cells of insects. This Bacillus thuringiensis subsp. israelensis protein is Pesticidal crystal protein Cry4Aa (cry4Aa).